The chain runs to 115 residues: uncharacterized protein (115 aa).

Residues 1–115 (MGVEISLDPP…ETVIKLSAAE (115 aa)) form the MSP domain.

This is an uncharacterized protein from Caenorhabditis elegans.